Here is a 406-residue protein sequence, read N- to C-terminus: Exo-alpha-sialidase (406 aa).

Residues 1–20 (MQSMRFMILALLVQFLPAWA) form the signal peptide. Substrate-binding residues include arginine 59, arginine 78, aspartate 84, and glutamine 148. Residue asparagine 235 is glycosylated (N-linked (GlcNAc...) asparagine). Substrate is bound by residues arginine 265, arginine 322, 322–323 (RR), 331–332 (YD), lysine 337, tyrosine 358, aspartate 376, and 376–378 (DFF). N-linked (GlcNAc...) asparagine glycosylation occurs at asparagine 396.

Belongs to the glycosyl hydrolase 33 family.

It catalyses the reaction Hydrolysis of alpha-(2-&gt;3)-, alpha-(2-&gt;6)-, alpha-(2-&gt;8)- glycosidic linkages of terminal sialic acid residues in oligosaccharides, glycoproteins, glycolipids, colominic acid and synthetic substrates.. Functionally, sialidase is able to release sialic acid from a wide variety of natural substrates including bovine salivary mucin, colominic acid, bovine fetuin, a serum glycoprotein containing both alpha-2-6 and alpha-2-3-linkages in a ratio of about 3:2, and glycoproteins and glycolipids from thermally denatured human lung epithelial cells. Does not show any trans-sialidase activity since it is able to remove terminal sialic acid residues but is unable to catalyze their transfer to the acceptor substrate. 2-keto-3-deoxynononic acid (KDN) is the preferred substrate and A.fumigatus can utilize KDN as a sole carbon source. This is Exo-alpha-sialidase from Aspergillus fumigatus (strain ATCC MYA-4609 / CBS 101355 / FGSC A1100 / Af293) (Neosartorya fumigata).